The following is a 529-amino-acid chain: Peptide chain release factor 3 (529 aa).

A tr-type G domain is found at 10–279 (EQRRCFGIIS…ALVEMAPAPG (270 aa)). Residues 19–26 (SHPDAGKT), 87–91 (DTPGH), and 141–144 (NKMD) contribute to the GTP site.

The protein belongs to the TRAFAC class translation factor GTPase superfamily. Classic translation factor GTPase family. PrfC subfamily.

The protein localises to the cytoplasm. Increases the formation of ribosomal termination complexes and stimulates activities of RF-1 and RF-2. It binds guanine nucleotides and has strong preference for UGA stop codons. It may interact directly with the ribosome. The stimulation of RF-1 and RF-2 is significantly reduced by GTP and GDP, but not by GMP. This is Peptide chain release factor 3 from Desulfatibacillum aliphaticivorans.